Consider the following 346-residue polypeptide: Probable WRKY transcription factor 54 (346 aa).

The tract at residues 109 to 130 (PVSCNGGDSGESKKKRLGVGKG) is disordered. Positions 121–130 (KKKRLGVGKG) are enriched in basic residues. The WRKY DNA-binding region spans 146 to 214 (VEAKSSEDRY…YIGYHTCTAN (69 aa)). Residues 267-282 (VKEEQNNNGDQSKDYY) show a composition bias toward basic and acidic residues. Residues 267-286 (VKEEQNNNGDQSKDYYEGSS) form a disordered region.

It belongs to the WRKY group III family. In terms of assembly, interacts with WRKY30. Binds to BZR2/BES1 to cooperatively regulate the expression of target genes. Interacts with ASK7/BIN2. In terms of processing, phosphorylated and destabilized by ASK7/BIN2. In terms of tissue distribution, expressed in leaves.

It is found in the nucleus. Functionally, transcription factor. Interacts specifically with the W box (5'-(T)TGAC[CT]-3'), a frequently occurring elicitor-responsive cis-acting element. Together with WRKY70, negative regulator of developmental senescence, probably via the regulation of several senescence-associated markers genes. Positive regulator of EDS1-dependent defense against E.amylovora. In collaboration with WRKY70, prevents stomatal closure and, consequently, osmotic stress tolerance. Together with WRKY46 and WRKY70, promotes brassinosteroid (BR)-regulated plant growth but prevent drought response by modulating gene expression. Negative regulator of SA biosynthesis. Prevents defense response to the necrotrophic pathogens P.carotovorum and B.cinerea, but promotes defense against biotrophic/hemibiotrophic pathogens P.syringae pv. tomato (Pst) DC3000, probably by regulating negatively the jasmonic acid (JA)/ethylene (ET) and positively the salicylic acid (SA) signaling pathways. The protein is Probable WRKY transcription factor 54 of Arabidopsis thaliana (Mouse-ear cress).